The following is a 531-amino-acid chain: MCSLASGATGGRGAVENEEDLPELSDSGDEAAWEDEDDADLPHGKQQTPCLFCNRLFTSAEETFSHCKSEHQFNIDSMVHKHGLEFYGYIKLINFIRLKNPTVEYMNSIYNPVPWEKEEYLKPVLEDDLLLQFDVEDLYEPVSVPFSYPNGLSENTSVVEKLKHMEARALSAEAALARAREDLQKMKQFAQDFVMHTDVRTCSSSTSVIADLQEDEDGVYFSSYGHYGIHEEMLKDKIRTESYRDFIYQNPHIFKDKVVLDVGCGTGILSMFAAKAGAKKVLGVDQSEILYQAMDIIRLNKLEDTITLIKGKIEEVHLPVEKVDVIISEWMGYFLLFESMLDSVLYAKNKYLAKGGSVYPDICTISLVAVSDVNKHADRIAFWDDVYGFKMSCMKKAVIPEAVVEVLDPKTLISEPCGIKHIDCHTTSISDLEFSSDFTLKITRTSMCTAIAGYFDIYFEKNCHNRVVFSTGPQSTKTHWKQTVFLLEKPFSVKAGEALKGKVTVHKNKKDPRSLTVTLTLNNSTQTYGLQ.

Residues 1-43 (MCSLASGATGGRGAVENEEDLPELSDSGDEAAWEDEDDADLPH) form a disordered region. An N-acetylcysteine modification is found at Cys-2. Acidic residues predominate over residues 16 to 39 (ENEEDLPELSDSGDEAAWEDEDDA). Phosphoserine occurs at positions 25 and 27. The C2H2-type zinc-finger motif lies at 48-71 (TPCLFCNRLFTSAEETFSHCKSEH). The segment at 48–71 (TPCLFCNRLFTSAEETFSHCKSEH) is interaction with ZNF200. Phosphoserine is present on Ser-171. Positions 186 to 531 (MKQFAQDFVM…NNSTQTYGLQ (346 aa)) are mediates interaction with ALDH1A1. The SAM-dependent MTase PRMT-type domain occupies 217–531 (DGVYFSSYGH…NNSTQTYGLQ (315 aa)). Residues Arg-239, Gly-263, Asp-285, Ile-313, and Glu-314 each contribute to the S-adenosyl-L-homocysteine site. Catalysis depends on residues Glu-329 and Glu-338. Residue Ser-343 participates in S-adenosyl-L-homocysteine binding.

The protein belongs to the class I-like SAM-binding methyltransferase superfamily. Protein arginine N-methyltransferase family. Monomer and homodimer. Interacts with EPB41L3 (via FERM domain); the interaction is direct and inhibits the protein-arginine N-methyltransferase activity of PRMT3. Interacts with the 40S ribosomal protein RPS2. Interacts with ALDH1A1; the interaction is direct, inhibits ALDH1A1 aldehyde dehydrogenase activity and is independent of the methyltransferase activity of PRMT3. Interacts (via zinc-finger) with ZNF200 (via C-terminus); the interaction is direct and required to localize PRMT3 to the nucleus and inhibit its proteasomal degradation.

It localises to the cytoplasm. The protein localises to the cytosol. It is found in the nucleus. The enzyme catalyses L-arginyl-[protein] + S-adenosyl-L-methionine = N(omega)-methyl-L-arginyl-[protein] + S-adenosyl-L-homocysteine + H(+). It catalyses the reaction L-arginyl-[protein] + 2 S-adenosyl-L-methionine = N(omega),N(omega)-dimethyl-L-arginyl-[protein] + 2 S-adenosyl-L-homocysteine + 2 H(+). Inhibited by N-ethylmaleimide and high concentrations of zinc chloride. Allosterically inhibited by SGC707. Allosterically inhibited by (1-(benzo[d][1,2,3]thiadiazol- 6-yl)-3-(2-cyclohexenylethyl)urea) and derivatives thereof. Functionally, protein-arginine N-methyltransferase that catalyzes both the monomethylation and asymmetric dimethylation of the guanidino nitrogens of arginine residues in target proteins, and therefore falls into the group of type I methyltransferases. Catalyzes the asymmetric arginine dimethylation at multiple sites in the Arg/Gly-rich region of small ribosomal subunit protein uS5/RPS2. Also appears to methylate other ribosomal proteins. May regulate retinoic acid synthesis and signaling by inhibiting ALDH1A1 retinal dehydrogenase activity. Contributes to methylation of histone H4 'Arg-3', a specific tag for epigenetic transcriptional activation. Mediates asymmetric arginine dimethylation of histone H4 'Arg-3' (H4R3me2a) in the promoter region of miRNA miR-3648, to promote its transcription and osteogenesis. The protein is Protein arginine N-methyltransferase 3 of Homo sapiens (Human).